Reading from the N-terminus, the 414-residue chain is Bystin (414 aa).

Basic residues predominate over residues 1-11 (MSAKRNTKLRH). Residues 1–91 (MSAKRNTKLR…PSDDEGQADD (91 aa)) are disordered. A compositionally biased stretch (basic and acidic residues) spans 12–24 (APLEHAYVDDKSV). Over residues 25 to 34 (RRNKRSKQRG) the composition is skewed to basic residues.

The protein belongs to the bystin family.

The protein resides in the nucleus. It localises to the nucleolus. In terms of biological role, required for processing of 20S pre-rRNA precursor and biogenesis of 40S ribosomal subunits. This chain is Bystin (bysl), found in Monosiga brevicollis (Choanoflagellate).